A 208-amino-acid chain; its full sequence is V-type ATP synthase subunit D (208 aa).

It belongs to the V-ATPase D subunit family.

Produces ATP from ADP in the presence of a proton gradient across the membrane. This chain is V-type ATP synthase subunit D, found in Chlamydia felis (strain Fe/C-56) (Chlamydophila felis).